Reading from the N-terminus, the 442-residue chain is Aspartate--tRNA(Asp/Asn) ligase (442 aa).

Glu-172 contacts L-aspartate. The tract at residues 194-197 is aspartate; sequence QFYK. Arg-216 provides a ligand contact to L-aspartate. ATP contacts are provided by residues 216–218, 224–226, and Glu-365; these read RAE and RHL. Positions 365 and 368 each coordinate Mg(2+). L-aspartate contacts are provided by Thr-368 and Arg-372. 413-416 lines the ATP pocket; the sequence is GLER.

The protein belongs to the class-II aminoacyl-tRNA synthetase family. Type 2 subfamily. As to quaternary structure, homodimer. The cofactor is Mg(2+).

The protein localises to the cytoplasm. It carries out the reaction tRNA(Asx) + L-aspartate + ATP = L-aspartyl-tRNA(Asx) + AMP + diphosphate. Functionally, aspartyl-tRNA synthetase with relaxed tRNA specificity since it is able to aspartylate not only its cognate tRNA(Asp) but also tRNA(Asn). Reaction proceeds in two steps: L-aspartate is first activated by ATP to form Asp-AMP and then transferred to the acceptor end of tRNA(Asp/Asn). In Aeropyrum pernix (strain ATCC 700893 / DSM 11879 / JCM 9820 / NBRC 100138 / K1), this protein is Aspartate--tRNA(Asp/Asn) ligase (aspS).